The following is a 174-amino-acid chain: Gamma-crystallin C (174 aa).

Beta/gamma crystallin 'Greek key' domains lie at 2-40 (GKIT…RVDS) and 41-83 (GCWM…CLIP). Position 23 is an S-methylcysteine (C23). Residues 84–87 (QTSS) are connecting peptide. Beta/gamma crystallin 'Greek key' domains follow at residues 88 to 128 (HRLR…HVLE) and 129 to 171 (GCWV…RRVV).

Belongs to the beta/gamma-crystallin family. In terms of assembly, monomer.

In terms of biological role, crystallins are the dominant structural components of the vertebrate eye lens. This is Gamma-crystallin C (CRYGC) from Canis lupus familiaris (Dog).